The sequence spans 92 residues: UPF0223 protein SGO_1052 (92 aa).

The protein belongs to the UPF0223 family.

The protein is UPF0223 protein SGO_1052 of Streptococcus gordonii (strain Challis / ATCC 35105 / BCRC 15272 / CH1 / DL1 / V288).